A 603-amino-acid chain; its full sequence is UvrABC system protein C (603 aa).

The GIY-YIG domain maps to 13–92; it reads NGPGVYLMKD…IRKHKPRYNI (80 aa). Residues 202 to 237 enclose the UVR domain; it reads NDLLQKIKEQMAAASERQEYELAARLRDRMFAIQAT.

The protein belongs to the UvrC family. As to quaternary structure, interacts with UvrB in an incision complex.

It localises to the cytoplasm. Functionally, the UvrABC repair system catalyzes the recognition and processing of DNA lesions. UvrC both incises the 5' and 3' sides of the lesion. The N-terminal half is responsible for the 3' incision and the C-terminal half is responsible for the 5' incision. This is UvrABC system protein C from Desulfatibacillum aliphaticivorans.